Here is a 303-residue protein sequence, read N- to C-terminus: Lipoyl synthase (303 aa).

[4Fe-4S] cluster-binding residues include Cys-34, Cys-39, Cys-45, Cys-60, Cys-64, Cys-67, and Ser-273. The Radical SAM core domain maps to 46-262 (WSKKHATVMI…ERVARTKGFL (217 aa)).

It belongs to the radical SAM superfamily. Lipoyl synthase family. Requires [4Fe-4S] cluster as cofactor.

It is found in the cytoplasm. It catalyses the reaction [[Fe-S] cluster scaffold protein carrying a second [4Fe-4S](2+) cluster] + N(6)-octanoyl-L-lysyl-[protein] + 2 oxidized [2Fe-2S]-[ferredoxin] + 2 S-adenosyl-L-methionine + 4 H(+) = [[Fe-S] cluster scaffold protein] + N(6)-[(R)-dihydrolipoyl]-L-lysyl-[protein] + 4 Fe(3+) + 2 hydrogen sulfide + 2 5'-deoxyadenosine + 2 L-methionine + 2 reduced [2Fe-2S]-[ferredoxin]. Its pathway is protein modification; protein lipoylation via endogenous pathway; protein N(6)-(lipoyl)lysine from octanoyl-[acyl-carrier-protein]: step 2/2. Its function is as follows. Catalyzes the radical-mediated insertion of two sulfur atoms into the C-6 and C-8 positions of the octanoyl moiety bound to the lipoyl domains of lipoate-dependent enzymes, thereby converting the octanoylated domains into lipoylated derivatives. This is Lipoyl synthase from Rickettsia bellii (strain OSU 85-389).